We begin with the raw amino-acid sequence, 296 residues long: Peptide transport system permease protein SapC (296 aa).

Residues 1–28 lie on the Cytoplasmic side of the membrane; it reads MPYDSVYSEKRPPGTLRTAWRKFYSDAP. A helical membrane pass occupies residues 29 to 49; the sequence is AMVGLYGCAGLALLCIFGGWI. Over 50–98 the chain is Periplasmic; that stretch reads APYGIDQQFLGYQLLPPSWSRYGEVSFFLGTDDLGRDVLSRLLSGAAPT. The helical transmembrane segment at 99-119 threads the bilayer; that stretch reads VGGAFIVTLAATLCGLVLGVV. In terms of domain architecture, ABC transmembrane type-1 spans 99-284; the sequence is VGGAFIVTLA…LSVLLVNLLG (186 aa). The Cytoplasmic portion of the chain corresponds to 120–133; it reads AGATHGLRSAVLNH. Residues 134 to 154 form a helical membrane-spanning segment; it reads ILDTLLSIPSLLLAIIVVAFA. At 155–196 the chain is on the periplasmic side; sequence GPHLSHAMFAVWLALLPRMVRSVYSMVHDELEKEYVIAARLD. A helical membrane pass occupies residues 197–217; sequence GATTLNILWFAILPNITAGLV. The Cytoplasmic portion of the chain corresponds to 218-222; that stretch reads TEITR. Residues 223 to 243 form a helical membrane-spanning segment; the sequence is ALSMAILDIAALGFLDLGAQL. Residues 244–257 are Periplasmic-facing; it reads PSPEWGAMLGDALE. Residues 258–278 traverse the membrane as a helical segment; the sequence is LIYVAPWTVMLPGAAITLSVL. Residues 279–296 are Cytoplasmic-facing; sequence LVNLLGDGIRRAIIAGVE.

It belongs to the binding-protein-dependent transport system permease family. OppBC subfamily.

It is found in the cell inner membrane. Involved in a peptide intake transport system that plays a role in the resistance to antimicrobial peptides. The chain is Peptide transport system permease protein SapC (sapC) from Salmonella typhi.